Reading from the N-terminus, the 185-residue chain is Elongation factor P (185 aa).

This sequence belongs to the elongation factor P family.

The protein localises to the cytoplasm. Its pathway is protein biosynthesis; polypeptide chain elongation. Functionally, involved in peptide bond synthesis. Stimulates efficient translation and peptide-bond synthesis on native or reconstituted 70S ribosomes in vitro. Probably functions indirectly by altering the affinity of the ribosome for aminoacyl-tRNA, thus increasing their reactivity as acceptors for peptidyl transferase. This is Elongation factor P from Streptococcus pyogenes serotype M4 (strain MGAS10750).